Reading from the N-terminus, the 199-residue chain is Dephospho-CoA kinase (199 aa).

One can recognise a DPCK domain in the interval 3–199 (VLGLTGSIGM…AAAKMPRRRD (197 aa)). 11 to 16 (GMGKST) serves as a coordination point for ATP.

The protein belongs to the CoaE family.

The protein localises to the cytoplasm. It carries out the reaction 3'-dephospho-CoA + ATP = ADP + CoA + H(+). Its pathway is cofactor biosynthesis; coenzyme A biosynthesis; CoA from (R)-pantothenate: step 5/5. Functionally, catalyzes the phosphorylation of the 3'-hydroxyl group of dephosphocoenzyme A to form coenzyme A. The polypeptide is Dephospho-CoA kinase (Rhodopseudomonas palustris (strain ATCC BAA-98 / CGA009)).